The chain runs to 392 residues: DNA replication and repair protein RecF (392 aa).

ATP is bound at residue G30–T37.

This sequence belongs to the RecF family.

It is found in the cytoplasm. Its function is as follows. The RecF protein is involved in DNA metabolism; it is required for DNA replication and normal SOS inducibility. RecF binds preferentially to single-stranded, linear DNA. It also seems to bind ATP. This chain is DNA replication and repair protein RecF, found in Chloroflexus aurantiacus (strain ATCC 29364 / DSM 637 / Y-400-fl).